Here is a 494-residue protein sequence, read N- to C-terminus: 4-trimethylaminobutyraldehyde dehydrogenase (494 aa).

Ser-2 is modified (N-acetylserine). Lys-30 is modified (N6-acetyllysine; alternate). The residue at position 30 (Lys-30) is an N6-succinyllysine; alternate. Lys-59 is modified (N6-succinyllysine). Residues Lys-180 and 232–236 (GSVPT) contribute to the NAD(+) site. The active-site Proton acceptor is Glu-254. Cys-288 (nucleophile) is an active-site residue. Lys-298 is subject to N6-acetyllysine. N6-acetyllysine; alternate is present on Lys-303. Lys-303 is modified (N6-succinyllysine; alternate). Lys-344 is subject to N6-acetyllysine. Position 391 (Glu-391) interacts with NAD(+).

Belongs to the aldehyde dehydrogenase family. In terms of assembly, homotetramer.

The protein resides in the cytoplasm. The protein localises to the cytosol. It catalyses the reaction 4-(trimethylamino)butanal + NAD(+) + H2O = 4-(trimethylamino)butanoate + NADH + 2 H(+). It carries out the reaction an aldehyde + NAD(+) + H2O = a carboxylate + NADH + 2 H(+). The catalysed reaction is 4-aminobutanal + NAD(+) + H2O = 4-aminobutanoate + NADH + 2 H(+). The enzyme catalyses formaldehyde + NAD(+) + H2O = formate + NADH + 2 H(+). It catalyses the reaction acetaldehyde + NAD(+) + H2O = acetate + NADH + 2 H(+). It carries out the reaction imidazole-4-acetaldehyde + NAD(+) + H2O = imidazole-4-acetate + NADH + 2 H(+). The catalysed reaction is acrolein + NAD(+) + H2O = acrylate + NADH + 2 H(+). The enzyme catalyses (5-hydroxyindol-3-yl)acetaldehyde + NAD(+) + H2O = (5-hydroxyindol-3-yl)acetate + NADH + 2 H(+). It catalyses the reaction 3,4-dihydroxyphenylacetaldehyde + NAD(+) + H2O = 3,4-dihydroxyphenylacetate + NADH + 2 H(+). It carries out the reaction spermine monoaldehyde + NAD(+) + H2O = N-(2-carboxyethyl)spermidine + NADH + 2 H(+). The catalysed reaction is propanal + NAD(+) + H2O = propanoate + NADH + 2 H(+). The enzyme catalyses butanal + NAD(+) + H2O = butanoate + NADH + 2 H(+). It catalyses the reaction pentanal + NAD(+) + H2O = pentanoate + NADH + 2 H(+). It carries out the reaction hexanal + NAD(+) + H2O = hexanoate + NADH + 2 H(+). It participates in amine and polyamine biosynthesis; carnitine biosynthesis. Converts gamma-trimethylaminobutyraldehyde into gamma-butyrobetaine with high efficiency (in vitro). Can catalyze the irreversible oxidation of a broad range of aldehydes to the corresponding acids in an NAD-dependent reaction, but with low efficiency. Catalyzes the oxidation of aldehydes arising from biogenic amines and polyamines. The polypeptide is 4-trimethylaminobutyraldehyde dehydrogenase (Mus musculus (Mouse)).